The primary structure comprises 311 residues: Arginine/serine-rich protein 1 (311 aa).

The tract at residues 1–125 is disordered; the sequence is MSTYVNDMWP…RSRSRSRGRS (125 aa). Serine 12 is modified (phosphoserine). Residues 20–31 show a composition bias toward low complexity; that stretch reads STSRSGGSSRLS. The span at 32–123 shows a compositional bias: basic residues; that stretch reads SRSRSRSFSR…RSRSRSRSRG (92 aa). 2 positions are modified to phosphoserine: serine 109 and serine 111. Omega-N-methylarginine is present on arginine 135.

This sequence belongs to the RSRP family. Post-translationally, phosphorylated. Phosphorylation at Ser-109 and Ser-111 mediates the interaction with spliceosome proteins.

The protein localises to the nucleus. Its function is as follows. Probably acts as a spliceosomal factor that contributes to spliceosome assembly and regulates the isoform switching of proteins such as PARP6. This chain is Arginine/serine-rich protein 1 (RSRP1), found in Pongo abelii (Sumatran orangutan).